The following is a 519-amino-acid chain: Exodeoxyribonuclease 7 large subunit (519 aa).

Residues 500–519 are disordered; that stretch reads VGRGKTRKPKEEPPAQGSLL.

This sequence belongs to the XseA family. As to quaternary structure, heterooligomer composed of large and small subunits.

The protein localises to the cytoplasm. It carries out the reaction Exonucleolytic cleavage in either 5'- to 3'- or 3'- to 5'-direction to yield nucleoside 5'-phosphates.. Its function is as follows. Bidirectionally degrades single-stranded DNA into large acid-insoluble oligonucleotides, which are then degraded further into small acid-soluble oligonucleotides. This Cereibacter sphaeroides (strain ATCC 17023 / DSM 158 / JCM 6121 / CCUG 31486 / LMG 2827 / NBRC 12203 / NCIMB 8253 / ATH 2.4.1.) (Rhodobacter sphaeroides) protein is Exodeoxyribonuclease 7 large subunit.